A 338-amino-acid chain; its full sequence is Adenylosuccinate synthetase (338 aa).

GTP is bound by residues 12–18 (GDEGKGK) and 42–44 (GHT). Catalysis depends on D13, which acts as the Proton acceptor. 2 residues coordinate Mg(2+): D13 and G42. Residues 13–16 (DEGK), 40–43 (NAGH), T127, R141, Q179, T194, and R256 each bind IMP. H43 (proton donor) is an active-site residue. 252–258 (TVTGRRR) contacts substrate. GTP-binding positions include R258, 284–286 (CLD), and 324–326 (STG).

It belongs to the adenylosuccinate synthetase family. Homodimer. The cofactor is Mg(2+).

The protein localises to the cytoplasm. The catalysed reaction is IMP + L-aspartate + GTP = N(6)-(1,2-dicarboxyethyl)-AMP + GDP + phosphate + 2 H(+). It functions in the pathway purine metabolism; AMP biosynthesis via de novo pathway; AMP from IMP: step 1/2. Its function is as follows. Plays an important role in the de novo pathway of purine nucleotide biosynthesis. Catalyzes the first committed step in the biosynthesis of AMP from IMP. In Methanococcus maripaludis (strain C7 / ATCC BAA-1331), this protein is Adenylosuccinate synthetase.